The chain runs to 84 residues: RNA-binding protein Hfq (84 aa).

A Sm domain is found at 10–69 (DPFLNILRKERIPVSIYLVNGIKLQGQIDSFDQYVVLLKNSVTQMVYKHAISTIVPAKAI).

This sequence belongs to the Hfq family. As to quaternary structure, homohexamer.

Functionally, RNA chaperone that binds small regulatory RNA (sRNAs) and mRNAs to facilitate mRNA translational regulation in response to envelope stress, environmental stress and changes in metabolite concentrations. Also binds with high specificity to tRNAs. This is RNA-binding protein Hfq from Nitrosomonas europaea (strain ATCC 19718 / CIP 103999 / KCTC 2705 / NBRC 14298).